Here is a 249-residue protein sequence, read N- to C-terminus: RING finger protein 223 (249 aa).

Positions 1 to 44 are disordered; sequence MSSGQQVWHTAVPPPRRSSSIASMPRSPSSAGSPRSPGTPGSER. Residues 17-44 are compositionally biased toward low complexity; it reads RSSSIASMPRSPSSAGSPRSPGTPGSER. The segment at 51–102 adopts an RING-type zinc-finger fold; the sequence is CSICFSGYDNIFKTPKELSCTHVFCLECLARLAAAQPVGRPGGEAVPCPFCR. Residues 199–219 form a helical membrane-spanning segment; it reads LVSALLLMLFCVALWPVQCAL. Residues 230–249 are disordered; the sequence is PPRPPATSTAASPLGPLTDN. Low complexity predominate over residues 235 to 249; that stretch reads ATSTAASPLGPLTDN.

It is found in the membrane. This is RING finger protein 223 (RNF223) from Homo sapiens (Human).